The following is a 270-amino-acid chain: Putative ABC transporter ATP-binding protein MG304 homolog (270 aa).

In terms of domain architecture, ABC transporter spans 2-232; that stretch reads LNVTNLSFTY…LHLFHQHHFT (231 aa). 36-43 is an ATP binding site; that stretch reads GHNGSGKS.

This sequence belongs to the ABC transporter superfamily.

In Mycoplasma pneumoniae (strain ATCC 29342 / M129 / Subtype 1) (Mycoplasmoides pneumoniae), this protein is Putative ABC transporter ATP-binding protein MG304 homolog.